The following is a 490-amino-acid chain: Ketol-acid reductoisomerase (NADP(+)) (490 aa).

The KARI N-terminal Rossmann domain occupies 15–208 (INLQKCKLID…GSHHAGILHS (194 aa)). NADP(+) is bound by residues 45-48 (CGSQ), R68, S78, and 108-110 (DKQ). The active site involves H132. G158 provides a ligand contact to NADP(+). KARI C-terminal knotted domains are found at residues 209–344 (SFIA…KCNI) and 345–484 (YYKQ…MTSM). 4 residues coordinate Mg(2+): D217, E221, E389, and E393. S414 serves as a coordination point for substrate.

Belongs to the ketol-acid reductoisomerase family. Mg(2+) is required as a cofactor.

It carries out the reaction (2R)-2,3-dihydroxy-3-methylbutanoate + NADP(+) = (2S)-2-acetolactate + NADPH + H(+). The enzyme catalyses (2R,3R)-2,3-dihydroxy-3-methylpentanoate + NADP(+) = (S)-2-ethyl-2-hydroxy-3-oxobutanoate + NADPH + H(+). It participates in amino-acid biosynthesis; L-isoleucine biosynthesis; L-isoleucine from 2-oxobutanoate: step 2/4. It functions in the pathway amino-acid biosynthesis; L-valine biosynthesis; L-valine from pyruvate: step 2/4. Its function is as follows. Involved in the biosynthesis of branched-chain amino acids (BCAA). Catalyzes an alkyl-migration followed by a ketol-acid reduction of (S)-2-acetolactate (S2AL) to yield (R)-2,3-dihydroxy-isovalerate. In the isomerase reaction, S2AL is rearranged via a Mg-dependent methyl migration to produce 3-hydroxy-3-methyl-2-ketobutyrate (HMKB). In the reductase reaction, this 2-ketoacid undergoes a metal-dependent reduction by NADPH to yield (R)-2,3-dihydroxy-isovalerate. The protein is Ketol-acid reductoisomerase (NADP(+)) of Buchnera aphidicola subsp. Melaphis rhois.